The following is a 51-amino-acid chain: Basic phospholipase A2 Bfon11 (51 aa).

Tyr27, Gly29, and Gly31 together coordinate Ca(2+). A disulfide bridge connects residues Cys28 and Cys43. His46 is an active-site residue. Asp47 is a binding site for Ca(2+).

Belongs to the phospholipase A2 family. Group II subfamily. D49 sub-subfamily. It depends on Ca(2+) as a cofactor. In terms of tissue distribution, expressed by the venom gland.

It is found in the secreted. It carries out the reaction a 1,2-diacyl-sn-glycero-3-phosphocholine + H2O = a 1-acyl-sn-glycero-3-phosphocholine + a fatty acid + H(+). Snake venom phospholipase A2 (PLA2) that impairs hemostasis. PLA2 catalyzes the calcium-dependent hydrolysis of the 2-acyl groups in 3-sn-phosphoglycerides. The polypeptide is Basic phospholipase A2 Bfon11 (Bothrops fonsecai (Fonseca's lancehead)).